Reading from the N-terminus, the 154-residue chain is Probable chemoreceptor glutamine deamidase CheD (154 aa).

This sequence belongs to the CheD family.

The catalysed reaction is L-glutaminyl-[protein] + H2O = L-glutamyl-[protein] + NH4(+). Probably deamidates glutamine residues to glutamate on methyl-accepting chemotaxis receptors (MCPs), playing an important role in chemotaxis. The chain is Probable chemoreceptor glutamine deamidase CheD from Methanococcus maripaludis (strain DSM 14266 / JCM 13030 / NBRC 101832 / S2 / LL).